The chain runs to 611 residues: Inhibitor of apoptosis protein (611 aa).

3 BIR repeats span residues 30 to 97 (ELYR…CSFV), 176 to 242 (EEAR…CPFV), and 262 to 329 (HEAR…CEYL). Residues C299, C302, H319, and C326 each contribute to the Zn(2+) site. The region spanning 446 to 536 (VASDDLSLIR…VLYKDLFVEK (91 aa)) is the CARD domain. The segment at 564–599 (CKVCMDKEVSIVFIPCGHLVVCKECAPSLRKCPICR) adopts an RING-type zinc-finger fold.

The protein belongs to the IAP family. In terms of tissue distribution, cells of the T-lymphocyte lineage. Found in both cortical and medullary cells of the thymus. Expressed at relatively high levels also in spleen, bursa, intestine and lung and at very low levels in testis, brain and skeletal muscle.

Its subcellular location is the nucleus. The protein localises to the cytoplasm. Functionally, apoptotic suppressor. This chain is Inhibitor of apoptosis protein (ITA), found in Gallus gallus (Chicken).